Consider the following 475-residue polypeptide: Isocitrate dehydrogenase [NADP] (475 aa).

Thr104 contributes to the NADP(+) binding site. Residues Ser113, Asn115, Arg119, Arg129, and Arg153 each coordinate D-threo-isocitrate. A Mg(2+)-binding site is contributed by Asp362. NADP(+)-binding positions include 394–400 (HGTAPKH), Asn407, Tyr446, and Arg450.

The protein belongs to the isocitrate and isopropylmalate dehydrogenases family. In terms of assembly, homodimer. Mg(2+) serves as cofactor. It depends on Mn(2+) as a cofactor.

It localises to the cytoplasm. It carries out the reaction D-threo-isocitrate + NADP(+) = 2-oxoglutarate + CO2 + NADPH. Inhibited non-competitively by ADP and 2-oxoglutarate, with respect to isocitrate and in a competitive manner by NADPH. Functionally, catalyzes the oxidative decarboxylation of isocitrate to 2-oxoglutarate and carbon dioxide with the concomitant reduction of NADP(+). Is specific for NADP(+), cannot use NAD(+). In Synechocystis sp. (strain ATCC 27184 / PCC 6803 / Kazusa), this protein is Isocitrate dehydrogenase [NADP].